A 122-amino-acid polypeptide reads, in one-letter code: MGFRVLVLIVMVTTSALPFTFSEESGRSPFRPALRSEEAQALRHGLTLLLARRADGQTPDMHQPEMRRPEMRRPEVRRPEVRQPEFAESPVGQKRWDAYDCIQFCMRPEMRHTYAQCLSICT.

An N-terminal signal peptide occupies residues 1-22; sequence MGFRVLVLIVMVTTSALPFTFS. A propeptide spanning residues 23–96 is cleaved from the precursor; that stretch reads EESGRSPFRP…AESPVGQKRW (74 aa). A disordered region spans residues 53–89; the sequence is RADGQTPDMHQPEMRRPEMRRPEVRRPEVRQPEFAES. Over residues 62-85 the composition is skewed to basic and acidic residues; it reads HQPEMRRPEMRRPEVRRPEVRQPE. Disulfide bonds link Cys-101–Cys-121 and Cys-105–Cys-117.

Expressed by the venom duct.

Its subcellular location is the secreted. The protein is Conotoxin flf14c of Conus anabathrum floridanus (Florida cone).